The primary structure comprises 355 residues: WAT1-related protein At1g25270 (355 aa).

A run of 10 helical transmembrane segments spans residues 4 to 24 (VVAM…FKIT), 33 to 53 (VLVA…ALIF), 65 to 85 (LLLL…ILYL), 94 to 114 (TFSA…GLVF), 134 to 154 (LLGA…IHIW), 175 to 195 (VSIL…LWLL), 207 to 227 (LYWN…IIAL), 244 to 264 (LLAT…LVAW), 272 to 292 (LFVT…GSFA), and 297 to 317 (LHLG…LVVW). One can recognise an EamA 1 domain in the interval 12–142 (FIFAGMFILF…TLLGACGALV (131 aa)). The 107-residue stretch at 210–316 (NTSLMNGVGS…IMVGGVYLVV (107 aa)) folds into the EamA 2 domain.

The protein belongs to the drug/metabolite transporter (DMT) superfamily. Plant drug/metabolite exporter (P-DME) (TC 2.A.7.4) family.

It is found in the membrane. This is WAT1-related protein At1g25270 from Arabidopsis thaliana (Mouse-ear cress).